We begin with the raw amino-acid sequence, 249 residues long: Probable transcriptional regulatory protein Sare_1779 (249 aa).

Belongs to the TACO1 family.

The protein resides in the cytoplasm. The protein is Probable transcriptional regulatory protein Sare_1779 of Salinispora arenicola (strain CNS-205).